Here is a 582-residue protein sequence, read N- to C-terminus: Vacuolar basic amino acid transporter 5 (582 aa).

Residues 1–44 (MEETKYSSQQEIEGACGSDASLNARGSNDSPMGLSLYLCLASLT) are Cytoplasmic-facing. A helical transmembrane segment spans residues 45–65 (LVLFITALDILIVGTIIDVVA). At 66 to 80 (EQFGNYSKTGWLVTG) the chain is on the vacuolar side. Asparagine 70 carries an N-linked (GlcNAc...) asparagine glycan. Residues 81 to 101 (YSLPNAILSLIWGRFASIIGF) traverse the membrane as a helical segment. Over 102 to 104 (QHS) the chain is Cytoplasmic. A helical transmembrane segment spans residues 105 to 125 (LILAILIFEAGSLIAALASSM). At 126 to 132 (NMLIFGR) the chain is on the vacuolar side. Residues 133–153 (VVAGVGGSGLQTLCFVIGCTM) form a helical membrane-spanning segment. Topologically, residues 154-160 (VGERSRP) are cytoplasmic. The helical transmembrane segment at 161-181 (LVISILSCAFAVAAIVGPIIG) threads the bilayer. The Vacuolar segment spans residues 182–191 (GAFTTHVTWR). Residues 192-212 (WCFYINLPIGGLAIIMFLLTY) traverse the membrane as a helical segment. Topologically, residues 213 to 256 (KAENKGILQQIKDAIGTISSFTFSKFRHQVNFKRLMNGIIFKFD) are cytoplasmic. The chain crosses the membrane as a helical span at residues 257–277 (FFGFALCSAGLVLFLLGLTFG). Residues 278-287 (GNKYSWNSGQ) are Vacuolar-facing. A helical membrane pass occupies residues 288 to 308 (VITYLVLGVLLFIFSLVYDFF). At 309–329 (LFDKFNPEPDNISYRPLLLRR) the chain is on the cytoplasmic side. Residues 330–350 (LVAKPAIIIVNMVTFLLCTGY) traverse the membrane as a helical segment. Residues 351 to 372 (NGQMIYSVQFFQLIFASSAWKA) lie on the Vacuolar side of the membrane. The chain crosses the membrane as a helical span at residues 373 to 393 (GLHLIPIVITNVIAAIASGVI). The Cytoplasmic portion of the chain corresponds to 394-401 (TKKLGLVK). A helical transmembrane segment spans residues 402-422 (PLLIFGGVLGVIGAGLMTLMT). N-linked (GlcNAc...) asparagine glycosylation occurs at asparagine 423. The Vacuolar segment spans residues 423–430 (NTSTKSTQ). A helical membrane pass occupies residues 431-451 (IGVLLLPGFSLGFALQASLMS). Residues 452–469 (AQLQITKDRPEAAMDFIE) are Cytoplasmic-facing. Residues 470-492 (VTAFNTFMKSLGTTLGGVLSTTV) form a helical membrane-spanning segment. At 493–539 (FSASFHNKVSRAHLEPYEGKTVDDMILYRLQNYDGSHSTIGNILSDS) the chain is on the vacuolar side. A helical transmembrane segment spans residues 540-560 (IKNVFWMDLGFYALGFLFCSF). At 561–582 (SSNKKLIIPKKDDTPEDNLEDK) the chain is on the cytoplasmic side.

The protein belongs to the major facilitator superfamily.

The protein resides in the vacuole membrane. In terms of biological role, transporter required for vacuolar uptake of basic amino acids. This chain is Vacuolar basic amino acid transporter 5 (VBA5), found in Saccharomyces cerevisiae (strain ATCC 204508 / S288c) (Baker's yeast).